We begin with the raw amino-acid sequence, 256 residues long: Thiazole synthase (256 aa).

Catalysis depends on lysine 96, which acts as the Schiff-base intermediate with DXP. 1-deoxy-D-xylulose 5-phosphate is bound by residues glycine 157, 183-184 (AG), and 205-206 (NT).

The protein belongs to the ThiG family. Homotetramer. Forms heterodimers with either ThiH or ThiS.

Its subcellular location is the cytoplasm. The catalysed reaction is [ThiS sulfur-carrier protein]-C-terminal-Gly-aminoethanethioate + 2-iminoacetate + 1-deoxy-D-xylulose 5-phosphate = [ThiS sulfur-carrier protein]-C-terminal Gly-Gly + 2-[(2R,5Z)-2-carboxy-4-methylthiazol-5(2H)-ylidene]ethyl phosphate + 2 H2O + H(+). Its pathway is cofactor biosynthesis; thiamine diphosphate biosynthesis. Its function is as follows. Catalyzes the rearrangement of 1-deoxy-D-xylulose 5-phosphate (DXP) to produce the thiazole phosphate moiety of thiamine. Sulfur is provided by the thiocarboxylate moiety of the carrier protein ThiS. In vitro, sulfur can be provided by H(2)S. The protein is Thiazole synthase of Bacillus cereus (strain ATCC 10987 / NRS 248).